Here is a 494-residue protein sequence, read N- to C-terminus: Transcription factor SOX-9 (494 aa).

2 disordered regions span residues 1-66 (MNLL…ESDE) and 159-275 (ERLR…FRDV). Over residues 27–42 (SDDSAGSPCPSGSGSD) the composition is skewed to low complexity. Basic and acidic residues-rich tracts occupy residues 56-66 (GDPDLKKESDE) and 159-174 (ERLR…DYKY). Residues 63-103 (ESDEDKFPVCIREAVSQVLKGYDWTLVPMPVRVNGSSKNKP) are dimerization (DIM). The PQA stretch occupies residues 63 to 103 (ESDEDKFPVCIREAVSQVLKGYDWTLVPMPVRVNGSSKNKP). S64 bears the Phosphoserine mark. Positions 105–173 (VKRPMNAFMV…QHKKDHPDYK (69 aa)) form a DNA-binding region, HMG box. Position 181 is a phosphoserine (S181). Positions 211–222 (SPQSSSSISEVH) are enriched in low complexity. The segment at 224–309 (PGEHSGQSQG…LPPNGHPGVP (86 aa)) is transactivation domain (TAM). 2 short sequence motifs (9aaTAD) span residues 277-286 (IGELSSDVIS) and 292-300 (DVNEFDQYL). A compositionally biased stretch (low complexity) spans 326-337 (SSASSPAGAGHA). The interval 326 to 402 (SSASSPAGAG…PQQQQQQQQQ (77 aa)) is disordered. Positions 344–353 (PQPPQPPAQP) are enriched in pro residues. The segment at 372–494 (RPHIKTEQLS…QPVYTQLTRP (123 aa)) is transactivation domain (TAC). Residue K376 forms a Glycyl lysine isopeptide (Lys-Gly) (interchain with G-Cter in SUMO) linkage. The segment covering 378–387 (EQLSPSHYSE) has biased composition (polar residues). Positions 388-402 (QQQHSPQQQQQQQQQ) are enriched in low complexity. The 9aaTAD 3 motif lies at 445 to 453 (GGLYSTFTY). Residues 462 to 494 (YTPIADTSGVPSIPQTHSPQHWEQPVYTQLTRP) are disordered. Polar residues predominate over residues 470–494 (GVPSIPQTHSPQHWEQPVYTQLTRP).

As to quaternary structure, interacts with SNAI2; triggers neural crest delamination in a phosphorylation dependent manner. Interacts with UBE2I. In terms of processing, phosphorylated at Ser-181 in the developing neural tube. Phosphorylation at either Ser-64 or Ser-181 is required for sumoylation, but phosphorylation is not dependent on sumoylation. Sumoylation is enhanced by PKA. Phosphorylation is required for interaction with SNAI2 to trigger neural crest delamination and for an efficient trunk neural crest delamination, whereas sumoylation plays a less significant role. Phosphorylation and sumoylation are induced by BMP signaling pathway. Sumoylated at Lys-376; phosphorylation at either Ser-64 or Ser-181 is required for sumoylation. Sumoylation is induced by BMP signaling pathway.

It is found in the nucleus. Its function is as follows. Transcription factor that plays a key role in chondrocytes differentiation and skeletal development. Specifically binds the 5'-ACAAAG-3' DNA motif present in enhancers and super-enhancers and promotes expression of genes important for chondrogenesis, including COL2A1. Plays a central role in successive steps of chondrocyte differentiation. Absolutely required for precartilaginous condensation, the first step in chondrogenesis during which skeletal progenitors differentiate into prechondrocytes. Together with SOX5 and SOX6, required for overt chondrogenesis when condensed prechondrocytes differentiate into early stage chondrocytes, the second step in chondrogenesis. Later, required to direct hypertrophic maturation and block osteoblast differentiation of growth plate chondrocytes: maintains chondrocyte columnar proliferation, delays prehypertrophy and then prevents osteoblastic differentiation of chondrocytes. Also required for chondrocyte hypertrophy, both indirectly, by keeping the lineage fate of chondrocytes, and directly, by remaining present in upper hypertrophic cells. Low lipid levels are the main nutritional determinant for chondrogenic commitment of skeletal progenitor cells: when lipids levels are low, FOXO transcription factors promote expression of SOX9, which induces chondrogenic commitment and suppresses fatty acid oxidation. In addition to cartilage development, also acts as a regulator of proliferation and differentiation in epithelial stem/progenitor cells. In response to bone morphogenetic protein stimulus, phosphorylation is induced and then sumoylation, allowing cooperation with SNAI2 to trigger neural crest delamination. The chain is Transcription factor SOX-9 from Gallus gallus (Chicken).